Reading from the N-terminus, the 373-residue chain is L-threonine 3-dehydrogenase, mitochondrial (373 aa).

Residues 62–67 (GGLGQL), 88–90 (DIR), 106–107 (NI), Tyr195, Lys199, and Ile225 contribute to the NAD(+) site. Tyr195 functions as the Proton donor/acceptor in the catalytic mechanism.

This sequence belongs to the NAD(P)-dependent epimerase/dehydratase family. In terms of assembly, homodimer.

Its subcellular location is the mitochondrion. It catalyses the reaction L-threonine + NAD(+) = (2S)-2-amino-3-oxobutanoate + NADH + H(+). It participates in amino-acid degradation; L-threonine degradation via oxydo-reductase pathway; glycine from L-threonine: step 1/2. Catalyzes the NAD(+)-dependent oxidation of L-threonine to 2-amino-3-ketobutyrate, mediating L-threonine catabolism. This chain is L-threonine 3-dehydrogenase, mitochondrial, found in Mus musculus (Mouse).